The sequence spans 1131 residues: Chitin synthase 1 (1131 aa).

Residues 1 to 20 show a composition bias toward basic and acidic residues; it reads MSDQNNRSRNEYHSNRKNEP. The tract at residues 1 to 22 is disordered; that stretch reads MSDQNNRSRNEYHSNRKNEPSY. Residues S34, S35, S270, S299, and S318 each carry the phosphoserine modification. The disordered stretch occupies residues 282–305; the sequence is YLHDDSRPVNDGKEELDSVKSGYS. T328 is modified (phosphothreonine). A Phosphoserine modification is found at S358. The next 7 helical transmembrane spans lie at 795 to 815, 833 to 853, 866 to 886, 914 to 934, 942 to 962, 1042 to 1062, and 1101 to 1121; these read FFYL…FFLV, VLSV…FILS, VLTC…SIFM, IVIS…IYLQ, FIQY…YAFC, LVII…LETG, and ILWL…IYMI.

It belongs to the chitin synthase family.

The protein localises to the cell membrane. The enzyme catalyses [(1-&gt;4)-N-acetyl-beta-D-glucosaminyl](n) + UDP-N-acetyl-alpha-D-glucosamine = [(1-&gt;4)-N-acetyl-beta-D-glucosaminyl](n+1) + UDP + H(+). Requires proteolytic activation. Its function is as follows. Polymerizes chitin, a structural polymer of the cell wall and septum, by transferring the sugar moiety of UDP-GlcNAc to the non-reducing end of the growing chitin polymer. Required for mitotic division septum formation during adverse conditions. The chain is Chitin synthase 1 (CHS1) from Saccharomyces cerevisiae (strain ATCC 204508 / S288c) (Baker's yeast).